The following is a 57-amino-acid chain: Large ribosomal subunit protein bL32 (57 aa).

The segment covering 1 to 19 has biased composition (basic residues); sequence MAVPKRRMSRANTRSRRAQ. The interval 1 to 20 is disordered; that stretch reads MAVPKRRMSRANTRSRRAQW.

It belongs to the bacterial ribosomal protein bL32 family.

In Mycobacterium avium (strain 104), this protein is Large ribosomal subunit protein bL32.